The sequence spans 579 residues: YTH domain-containing family protein 2 (579 aa).

The tract at residues Met-1–Asn-45 is disordered. Position 2 is an N-acetylserine (Ser-2). Phosphoserine occurs at positions 2, 4, 5, 22, 39, and 196. Residues Ser-2–Glu-384 form a localization to mRNA processing bodies (P-bodies) region. The disordered stretch occupies residues Ala-247–Pro-387. Residues Ala-291–Pro-316 show a composition bias toward polar residues. The span at Ala-337–Thr-349 shows a compositional bias: low complexity. Ser-359 is modified (phosphoserine). The segment covering Ser-359–Val-371 has biased composition (gly residues). Residues Gly-372 to Ser-383 show a composition bias toward polar residues. Residues Pro-385–Lys-579 form an interaction with m6A-containing mRNAs region. Residue Ser-394 is modified to Phosphoserine. One can recognise a YTH domain in the interval Gly-410–Ile-544. Residues Lys-416–Tyr-418, Asp-422, Trp-432–Cys-433, Asn-462, Trp-486, and Trp-491 contribute to the RNA site.

This sequence belongs to the YTHDF family. YTHDF2 subfamily. As to quaternary structure, interacts with CNOT1; interaction is direct and promotes recruitment of the CCR4-NOT complex. Interacts with YTHDF3. Interacts with RIDA/HRSP12; interaction leads to recruitment of the ribonuclease P/MRP complex. Ubiquitinated by the SCF(SKP2) complex, leading to its degradation. Highly expressed in induced pluripotent stem cells (iPSCs) and down-regulated during neural differentiation.

The protein localises to the cytoplasm. It is found in the cytosol. The protein resides in the P-body. It localises to the stress granule. Its subcellular location is the nucleus. Specifically recognizes and binds N6-methyladenosine (m6A)-containing RNAs, and regulates their stability. M6A is a modification present at internal sites of mRNAs and some non-coding RNAs and plays a role in mRNA stability and processing. Acts as a regulator of mRNA stability by promoting degradation of m6A-containing mRNAs via interaction with the CCR4-NOT and ribonuclease P/MRP complexes, depending on the context. The YTHDF paralogs (YTHDF1, YTHDF2 and YTHDF3) share m6A-containing mRNAs targets and act redundantly to mediate mRNA degradation and cellular differentiation. M6A-containing mRNAs containing a binding site for RIDA/HRSP12 (5'-GGUUC-3') are preferentially degraded by endoribonucleolytic cleavage: cooperative binding of RIDA/HRSP12 and YTHDF2 to transcripts leads to recruitment of the ribonuclease P/MRP complex. Other m6A-containing mRNAs undergo deadenylation via direct interaction between YTHDF2 and CNOT1, leading to recruitment of the CCR4-NOT and subsequent deadenylation of m6A-containing mRNAs. Required maternally to regulate oocyte maturation: probably acts by binding to m6A-containing mRNAs, thereby regulating maternal transcript dosage during oocyte maturation, which is essential for the competence of oocytes to sustain early zygotic development. Also required during spermatogenesis: regulates spermagonial adhesion by promoting degradation of m6A-containing transcripts coding for matrix metallopeptidases. Also involved in hematopoietic stem cells specification by binding to m6A-containing mRNAs, leading to promote their degradation. Also acts as a regulator of neural development by promoting m6A-dependent degradation of neural development-related mRNA targets. Inhibits neural specification of induced pluripotent stem cells by binding to methylated neural-specific mRNAs and promoting their degradation, thereby restraining neural differentiation. Regulates circadian regulation of hepatic lipid metabolism: acts by promoting m6A-dependent degradation of PPARA transcripts. Regulates the innate immune response to infection by inhibiting the type I interferon response: acts by binding to m6A-containing IFNB transcripts and promoting their degradation. May also act as a promoter of cap-independent mRNA translation following heat shock stress: upon stress, relocalizes to the nucleus and specifically binds mRNAs with some m6A methylation mark at their 5'-UTR, protecting demethylation of mRNAs by FTO, thereby promoting cap-independent mRNA translation. Regulates mitotic entry by promoting the phase-specific m6A-dependent degradation of WEE1 transcripts. Promotes formation of phase-separated membraneless compartments, such as P-bodies or stress granules, by undergoing liquid-liquid phase separation upon binding to mRNAs containing multiple m6A-modified residues: polymethylated mRNAs act as a multivalent scaffold for the binding of YTHDF proteins, juxtaposing their disordered regions and thereby leading to phase separation. The resulting mRNA-YTHDF complexes then partition into different endogenous phase-separated membraneless compartments, such as P-bodies, stress granules or neuronal RNA granules. May also recognize and bind RNAs modified by C5-methylcytosine (m5C) and act as a regulator of rRNA processing. In terms of biological role, (Microbial infection) Promotes viral gene expression and replication of polyomavirus SV40: acts by binding to N6-methyladenosine (m6A)-containing viral RNAs. Its function is as follows. (Microbial infection) Promotes viral gene expression and virion production of kaposis sarcoma-associated herpesvirus (KSHV) at some stage of the KSHV life cycle (in iSLK.219 and iSLK.BAC16 cells). Acts by binding to N6-methyladenosine (m6A)-containing viral RNAs. This chain is YTH domain-containing family protein 2, found in Homo sapiens (Human).